The primary structure comprises 61 residues: Protein MATERNALLY EXPRESSED GENE 6 (61 aa).

An intrachain disulfide couples cysteine 38 to cysteine 60.

This sequence belongs to the MEG family. In terms of tissue distribution, ubiquitous.

The polypeptide is Protein MATERNALLY EXPRESSED GENE 6 (MEG6) (Zea mays (Maize)).